The primary structure comprises 346 residues: Zinc transporter YKE4 (346 aa).

Over M1–K2 the chain is Extracellular. A helical membrane pass occupies residues A3–H23. Residues H24–A69 are Cytoplasmic-facing. A helical transmembrane segment spans residues I70–L90. Residues R91–T99 lie on the Extracellular side of the membrane. Residues L100–I120 traverse the membrane as a helical segment. At P121 to G126 the chain is on the cytoplasmic side. Residues V127–L147 traverse the membrane as a helical segment. The Extracellular segment spans residues D148–G202. N184 is a glycosylation site (N-linked (GlcNAc...) asparagine). Residues I203 to V223 form a helical membrane-spanning segment. Topologically, residues T224–Q252 are cytoplasmic. Residues A253–G273 traverse the membrane as a helical segment. N-linked (GlcNAc...) asparagine glycosylation is found at N274 and N285. Residues N274–M290 are Extracellular-facing. A helical transmembrane segment spans residues L291–L311. The Cytoplasmic segment spans residues H312–E322. The helical transmembrane segment at F323–M343 threads the bilayer. Topologically, residues D344–H346 are extracellular.

It belongs to the ZIP transporter (TC 2.A.5) family. KE4/Catsup subfamily.

The protein localises to the endoplasmic reticulum membrane. Zinc transporter whose role depends on the zinc status of the cells. It helps to balance zinc levels between the cytosol and the secretory pathway. It transports zinc into the secretory pathway in a zinc-adequate environment and in a high zinc medium. In high zinc medium, transport of zinc into the secretory pathway is a way to eliminate zinc from the cytosol. Under low cytosolic zinc conditions, it removes zinc from the secretory pathway and acts as a zinc importer that helps to alleviate ER stress. This chain is Zinc transporter YKE4 (YKE4), found in Saccharomyces cerevisiae (strain ATCC 204508 / S288c) (Baker's yeast).